Here is a 242-residue protein sequence, read N- to C-terminus: Biosynthetic peptidoglycan transglycosylase (242 aa).

The chain crosses the membrane as a helical span at residues 19–39 (LMVVLAVFWGGGIALFSVAPV).

It belongs to the glycosyltransferase 51 family.

Its subcellular location is the cell inner membrane. It catalyses the reaction [GlcNAc-(1-&gt;4)-Mur2Ac(oyl-L-Ala-gamma-D-Glu-L-Lys-D-Ala-D-Ala)](n)-di-trans,octa-cis-undecaprenyl diphosphate + beta-D-GlcNAc-(1-&gt;4)-Mur2Ac(oyl-L-Ala-gamma-D-Glu-L-Lys-D-Ala-D-Ala)-di-trans,octa-cis-undecaprenyl diphosphate = [GlcNAc-(1-&gt;4)-Mur2Ac(oyl-L-Ala-gamma-D-Glu-L-Lys-D-Ala-D-Ala)](n+1)-di-trans,octa-cis-undecaprenyl diphosphate + di-trans,octa-cis-undecaprenyl diphosphate + H(+). It functions in the pathway cell wall biogenesis; peptidoglycan biosynthesis. Peptidoglycan polymerase that catalyzes glycan chain elongation from lipid-linked precursors. The sequence is that of Biosynthetic peptidoglycan transglycosylase from Escherichia coli (strain 55989 / EAEC).